The following is a 1074-amino-acid chain: Fibrous sheath CABYR-binding protein (1074 aa).

A disordered region spans residues 1–73; that stretch reads MEECEEPEEP…SKDNYSRKEY (73 aa). Residues Ser-25, Ser-57, Ser-186, and Ser-275 each carry the phosphoserine modification. 2 disordered regions span residues 272-294 and 317-343; these read QAPSPAEETSAAETATTTAKDVV and LVQGALSDKPSDQQYPQGTEMAPSELP. Residues 274 to 290 are compositionally biased toward low complexity; it reads PSPAEETSAAETATTTA. Ser-365 carries the phosphoserine modification. 2 disordered regions span residues 437-789 and 818-982; these read VSAD…PLES and GVPA…PLKT. The span at 448 to 467 shows a compositional bias: low complexity; sequence PPSAEDASEEVASSEVLPPS. The segment covering 528–544 has biased composition (pro residues); sequence VLPPPAEEAPAEVPPPL. Residues 558-575 show a composition bias toward low complexity; sequence EEGPAEVPLAPAEEVPAE. Composition is skewed to pro residues over residues 576-592 and 673-688; these read FLPPPAEEVPAEVPPPL and PLPPTAERPEEAPPPA. Residues 689–720 are compositionally biased toward low complexity; sequence TEEAPVEVLPPATEEAPVEVLPPATEEAPVEV. Ser-1020 carries the phosphoserine modification. The segment at 1026–1054 is disordered; that stretch reads SEKELESTTLTSDKMSEGIDSVPEDVSGT.

In terms of assembly, interacts with CABYR. Interacts with ROPN1 and ROPN1L; the interaction increases upon spermatozoa capacitation conditions. Phosphorylated by PKA upon spermatozoa capacitation conditions. As to expression, expression is restricted to testis and epididymis, expressed by spermatozoa.

The protein localises to the cell projection. It localises to the cilium. The protein resides in the flagellum. May be involved in the later stages of fibrous sheath biogenesis and spermatozoa capacitation. Inhibits ROPN1 and ROPN1L SUMOylation. Binds calcium. The polypeptide is Fibrous sheath CABYR-binding protein (Mus musculus (Mouse)).